A 380-amino-acid chain; its full sequence is Chaperone protein DnaJ (380 aa).

Residues 5–70 (DYYEVLGVAK…QKRAAYDQYG (66 aa)) enclose the J domain. Residues 140-218 (GYDTQIRVPS…CHGAGKVKET (79 aa)) form a CR-type zinc finger. Cysteine 153, cysteine 156, cysteine 170, cysteine 173, cysteine 192, cysteine 195, cysteine 206, and cysteine 209 together coordinate Zn(2+). CXXCXGXG motif repeat units follow at residues 153–160 (CEVCHGSG), 170–177 (CPTCSGSG), 192–199 (CPKCHGTG), and 206–213 (CGHCHGAG).

Belongs to the DnaJ family. Homodimer. It depends on Zn(2+) as a cofactor.

It is found in the cytoplasm. Functionally, participates actively in the response to hyperosmotic and heat shock by preventing the aggregation of stress-denatured proteins and by disaggregating proteins, also in an autonomous, DnaK-independent fashion. Unfolded proteins bind initially to DnaJ; upon interaction with the DnaJ-bound protein, DnaK hydrolyzes its bound ATP, resulting in the formation of a stable complex. GrpE releases ADP from DnaK; ATP binding to DnaK triggers the release of the substrate protein, thus completing the reaction cycle. Several rounds of ATP-dependent interactions between DnaJ, DnaK and GrpE are required for fully efficient folding. Also involved, together with DnaK and GrpE, in the DNA replication of plasmids through activation of initiation proteins. The polypeptide is Chaperone protein DnaJ (Paraburkholderia xenovorans (strain LB400)).